Reading from the N-terminus, the 619-residue chain is Kininogen-2 (619 aa).

The first 18 residues, 1–18 (MKLITILFLCSRLLPSLT), serve as a signal peptide directing secretion. Position 19 is a pyrrolidone carboxylic acid (Gln-19). The 105-residue stretch at 27–131 (CNDQDVFKAV…IQTCLITPAE (105 aa)) folds into the Cystatin kininogen-type 1 domain. Cystine bridges form between Cys-27/Cys-589, Cys-82/Cys-93, Cys-106/Cys-125, Cys-141/Cys-144, Cys-205/Cys-217, Cys-228/Cys-247, Cys-261/Cys-264, Cys-325/Cys-337, and Cys-348/Cys-367. N-linked (GlcNAc...) asparagine glycosylation is present at Asn-87. A glycan (O-linked (GalNAc...) threonine; partial) is linked at Thr-136. In terms of domain architecture, Cystatin kininogen-type 2 spans 150–253 (TKSPDLEPVL…SQKCDLYPGE (104 aa)). N-linked (GlcNAc...) asparagine glycans are attached at residues Asn-168 and Asn-169. N-linked (GlcNAc...) asparagine; partial glycosylation is present at Asn-197. Asn-204 carries an N-linked (GlcNAc...) asparagine glycan. Residues 270 to 373 (VDSPDLEEAL…TVNCQPLGQT (104 aa)) enclose the Cystatin kininogen-type 3 domain. Residue Asn-280 is glycosylated (N-linked (GlcNAc...) asparagine). At Pro-380 the chain carries 4-hydroxyproline. The disordered stretch occupies residues 394-495 (EGSTTVSLPH…GKNNGKHYDW (102 aa)). Ser-396 is a glycosylation site (O-linked (GalNAc...) serine). Residues Thr-397 and Thr-398 are each glycosylated (O-linked (GalNAc...) threonine). Ser-400 and Ser-404 each carry an O-linked (GalNAc...) serine glycan. Positions 442–490 (GHKHKHDQGHGHHRSHGLGHGHQKQHGLGHGHKHGHGHGKHKNKGKNNG) are enriched in basic residues. A glycan (O-linked (GalNAc...) serine) is linked at Ser-510. Thr-518, Thr-522, Thr-534, Thr-546, Thr-551, and Thr-568 each carry an O-linked (GalNAc...) threonine glycan.

In terms of processing, bradykinin is released from kininogen by plasma kallikrein. As to expression, plasma.

The protein resides in the secreted. The protein localises to the extracellular space. (1) Kininogens are inhibitors of thiol proteases; (2) HMW-kininogen plays an important role in blood coagulation by helping to position optimally prekallikrein and factor XI next to factor XII; (3) HMW-kininogen inhibits the thrombin- and plasmin-induced aggregation of thrombocytes; (4) the active peptide bradykinin that is released from HMW-kininogen shows a variety of physiological effects: (4A) influence in smooth muscle contraction, (4B) induction of hypotension, (4C) natriuresis and diuresis, (4D) decrease in blood glucose level, (4E) it is a mediator of inflammation and causes (4E1) increase in vascular permeability, (4E2) stimulation of nociceptors (4E3) release of other mediators of inflammation (e.g. prostaglandins), (4F) it has a cardioprotective effect (directly via bradykinin action, indirectly via endothelium-derived relaxing factor action); (5) LMW-kininogen inhibits the aggregation of thrombocytes; (6) LMW-kininogen is in contrast to HMW-kininogen not involved in blood clotting. The chain is Kininogen-2 (KNG2) from Bos taurus (Bovine).